The sequence spans 210 residues: Cytochrome c biogenesis ATP-binding export protein CcmA (210 aa).

The 207-residue stretch at 3 to 209 (LTVTNLACAR…PADDPFAGVT (207 aa)) folds into the ABC transporter domain. Position 35 to 42 (35 to 42 (GPNGIGKT)) interacts with ATP.

Belongs to the ABC transporter superfamily. CcmA exporter (TC 3.A.1.107) family. The complex is composed of two ATP-binding proteins (CcmA) and two transmembrane proteins (CcmB).

The protein resides in the cell inner membrane. It catalyses the reaction heme b(in) + ATP + H2O = heme b(out) + ADP + phosphate + H(+). Functionally, part of the ABC transporter complex CcmAB involved in the biogenesis of c-type cytochromes; once thought to export heme, this seems not to be the case, but its exact role is uncertain. Responsible for energy coupling to the transport system. The chain is Cytochrome c biogenesis ATP-binding export protein CcmA from Cereibacter sphaeroides (strain ATCC 17023 / DSM 158 / JCM 6121 / CCUG 31486 / LMG 2827 / NBRC 12203 / NCIMB 8253 / ATH 2.4.1.) (Rhodobacter sphaeroides).